The following is a 493-amino-acid chain: UDP-N-acetylmuramoyl-L-alanyl-D-glutamate--L-lysine ligase (493 aa).

Serine 30 is a binding site for UDP-N-acetyl-alpha-D-muramoyl-L-alanyl-D-glutamate. 110 to 116 contributes to the ATP binding site; the sequence is GTNGKTS. Residues asparagine 151, 152 to 153, serine 179, and arginine 187 each bind UDP-N-acetyl-alpha-D-muramoyl-L-alanyl-D-glutamate; that span reads TT. Lysine 219 bears the N6-carboxylysine mark. The L-lysine recognition motif signature appears at 406–409; it reads DNPA.

Belongs to the MurCDEF family. MurE subfamily. Mg(2+) serves as cofactor. Post-translationally, carboxylation is probably crucial for Mg(2+) binding and, consequently, for the gamma-phosphate positioning of ATP.

The protein resides in the cytoplasm. The catalysed reaction is UDP-N-acetyl-alpha-D-muramoyl-L-alanyl-D-glutamate + L-lysine + ATP = UDP-N-acetyl-alpha-D-muramoyl-L-alanyl-gamma-D-glutamyl-L-lysine + ADP + phosphate + H(+). It participates in cell wall biogenesis; peptidoglycan biosynthesis. In terms of biological role, catalyzes the addition of L-lysine to the nucleotide precursor UDP-N-acetylmuramoyl-L-alanyl-D-glutamate (UMAG) in the biosynthesis of bacterial cell-wall peptidoglycan. Cannot use diaminopimelate as substrate. Can accept L-ornithine as substrate, but the efficiency is 400-fold lower than that with L-lysine. Seems to have a role in beta-lactam antibiotic resistance. In Staphylococcus aureus (strain NCTC 8325 / PS 47), this protein is UDP-N-acetylmuramoyl-L-alanyl-D-glutamate--L-lysine ligase.